The primary structure comprises 236 residues: HTH-type transcriptional regulator SACE_5812 (236 aa).

Residues 30 to 90 (LLTQDKIVSA…LALDAVFGEV (61 aa)) form the HTH tetR-type domain. A DNA-binding region (H-T-H motif) is located at residues 53-72 (SMRKLADRLQAHATSLYWHV).

In terms of biological role, transcriptional regulator that inhibits erythromycin production. Directly represses the expression of SACE_5813, eryAI (encoding polyketide synthase I) and ermE (encoding rRNA methyltransferase), suggesting its direct regulation of the erythromycin biosynthesis gene cluster. May play an important role in regulating secondary metabolism in actinomycetes. This chain is HTH-type transcriptional regulator SACE_5812, found in Saccharopolyspora erythraea (strain ATCC 11635 / DSM 40517 / JCM 4748 / NBRC 13426 / NCIMB 8594 / NRRL 2338).